A 218-amino-acid polypeptide reads, in one-letter code: Host range factor 1 (218 aa).

Its function is as follows. Facilitates AcMNPV replication in two non-permissive cell lines, IPLB-Ld652Y and IPLB-LdFB. This chain is Host range factor 1 (HRF-1), found in Lepidoptera (butterflies and moths).